The following is a 388-amino-acid chain: Na(+)/H(+) antiporter NhaA (388 aa).

Topologically, residues 1 to 11 (MKHLHRFFSSD) are cytoplasmic. A helical membrane pass occupies residues 12 to 31 (ASGGIILIIAAILAMIMANS). The Periplasmic segment spans residues 32 to 58 (GATSGWYHDFLETPVQLRVGSLEINKN). The chain crosses the membrane as a helical span at residues 59–80 (MLLWINDALMAVFFLLVGLEVK). Residues 81-96 (RELMQGSLASLRQAAF) lie on the Cytoplasmic side of the membrane. A helical membrane pass occupies residues 97–116 (PVIAAIGGMIVPALLYLAFN). Residues 117–122 (YADPIT) are Periplasmic-facing. A helical transmembrane segment spans residues 123–130 (REGWAIPA). Residues 131-154 (ATDIAFALGVLALLGSRVPLALKI) lie on the Cytoplasmic side of the membrane. A helical membrane pass occupies residues 155–176 (FLMALAIIDDLGAIIIIALFYT). The Periplasmic segment spans residues 177-180 (NDLS). The helical transmembrane segment at 181–200 (MASLGVAAVAIAVLAVLNLC) threads the bilayer. The Cytoplasmic portion of the chain corresponds to 201-204 (GVRR). The chain crosses the membrane as a helical span at residues 205 to 222 (TGVYILVGVVLWTAVLKS). Residue glycine 223 is a topological domain, periplasmic. The chain crosses the membrane as a helical span at residues 224-236 (VHATLAGVIVGFF). Over 237-253 (IPLKEKHGRSPAKRLEH) the chain is Cytoplasmic. A helical membrane pass occupies residues 254–272 (VLHPWVAYLILPLFAFANA). The Periplasmic portion of the chain corresponds to 273 to 286 (GVSLQGVTLDGLTS). The helical transmembrane segment at 287-310 (ILPLGIIAGLLIGKPLGISLFCWL) threads the bilayer. Over 311-339 (ALRLKLAHLPEGTTYQQIMAVGILCGIGF) the chain is Cytoplasmic. The helical transmembrane segment at 340 to 350 (TMSIFIASLAF) threads the bilayer. Residues 351-357 (GSVDPEL) are Periplasmic-facing. Residues 358–380 (INWAKLGILVGSISSAVIGYSWL) traverse the membrane as a helical segment. The Cytoplasmic portion of the chain corresponds to 381 to 388 (RVRLRPSV).

Belongs to the NhaA Na(+)/H(+) (TC 2.A.33) antiporter family.

It is found in the cell inner membrane. The catalysed reaction is Na(+)(in) + 2 H(+)(out) = Na(+)(out) + 2 H(+)(in). Its function is as follows. Na(+)/H(+) antiporter that extrudes sodium in exchange for external protons. This chain is Na(+)/H(+) antiporter NhaA, found in Escherichia coli O9:H4 (strain HS).